The primary structure comprises 239 residues: Fatty acid metabolism regulator protein (239 aa).

The 69-residue stretch at 6–74 (KGPASFAEKY…HGKPTQVNNF (69 aa)) folds into the HTH gntR-type domain. The segment at residues 34-53 (ERELSELIGVTRTTLREVLQ) is a DNA-binding region (H-T-H motif).

Homodimer.

It is found in the cytoplasm. Its function is as follows. Multifunctional regulator of fatty acid metabolism. The chain is Fatty acid metabolism regulator protein from Shewanella frigidimarina (strain NCIMB 400).